We begin with the raw amino-acid sequence, 185 residues long: Elongation factor P (185 aa).

This sequence belongs to the elongation factor P family.

The protein localises to the cytoplasm. It participates in protein biosynthesis; polypeptide chain elongation. Its function is as follows. Involved in peptide bond synthesis. Stimulates efficient translation and peptide-bond synthesis on native or reconstituted 70S ribosomes in vitro. Probably functions indirectly by altering the affinity of the ribosome for aminoacyl-tRNA, thus increasing their reactivity as acceptors for peptidyl transferase. The sequence is that of Elongation factor P from Bacillus velezensis (strain DSM 23117 / BGSC 10A6 / LMG 26770 / FZB42) (Bacillus amyloliquefaciens subsp. plantarum).